The primary structure comprises 154 residues: Deoxyuridine 5'-triphosphate nucleotidohydrolase (154 aa).

Substrate contacts are provided by residues 72-74, N85, 89-91, and M99; these read RSG and LID.

Belongs to the dUTPase family. It depends on Mg(2+) as a cofactor.

The catalysed reaction is dUTP + H2O = dUMP + diphosphate + H(+). The protein operates within pyrimidine metabolism; dUMP biosynthesis; dUMP from dCTP (dUTP route): step 2/2. This enzyme is involved in nucleotide metabolism: it produces dUMP, the immediate precursor of thymidine nucleotides and it decreases the intracellular concentration of dUTP so that uracil cannot be incorporated into DNA. This Psychrobacter cryohalolentis (strain ATCC BAA-1226 / DSM 17306 / VKM B-2378 / K5) protein is Deoxyuridine 5'-triphosphate nucleotidohydrolase.